A 195-amino-acid chain; its full sequence is Dephospho-CoA kinase (195 aa).

Residues 4-195 form the DPCK domain; the sequence is IIGLTGGIAS…EQILDALQRL (192 aa). 12 to 17 provides a ligand contact to ATP; the sequence is ASGKST.

The protein belongs to the CoaE family.

It localises to the cytoplasm. It catalyses the reaction 3'-dephospho-CoA + ATP = ADP + CoA + H(+). Its pathway is cofactor biosynthesis; coenzyme A biosynthesis; CoA from (R)-pantothenate: step 5/5. Catalyzes the phosphorylation of the 3'-hydroxyl group of dephosphocoenzyme A to form coenzyme A. In Streptococcus agalactiae serotype III (strain NEM316), this protein is Dephospho-CoA kinase.